Here is a 96-residue protein sequence, read N- to C-terminus: UPF0235 protein VIBHAR_03581 (96 aa).

This sequence belongs to the UPF0235 family.

The sequence is that of UPF0235 protein VIBHAR_03581 from Vibrio campbellii (strain ATCC BAA-1116).